The sequence spans 236 residues: MTRRYWNINLKEMIEAGVHFGHGIKKWNPKMAPYISAKRKGTHITNLARTARFLSEACDLVFDAASQGKSFLIVGTKKRAADLVASAAIRSRCHYVNKKWFSGMLTNWSITKTRLSQFRDLRAEEKMGKFHHLPKRDAAILKRKLSTLQRYLGGIKYMTRLPDIVIVLDQQKEYIALRECAILGIPTISLVDTNCDPDLANISIPANDDTMTSIRLILNKLVFAISEGRSLYIRNR.

The protein belongs to the universal ribosomal protein uS2 family.

The protein localises to the plastid. It localises to the chloroplast. This chain is Small ribosomal subunit protein uS2c (rps2), found in Saccharum hybrid (Sugarcane).